We begin with the raw amino-acid sequence, 188 residues long: Inosine triphosphate pyrophosphatase (188 aa).

An ITP-binding site is contributed by 9 to 14 (TGNAKK). Position 39 (E39) interacts with Mg(2+). Residues K51, 67-68 (DT), K84, 143-146 (FGWD), K166, and 171-172 (HR) each bind ITP.

The protein belongs to the HAM1 NTPase family. Homodimer. The cofactor is Mg(2+). Requires Mn(2+) as cofactor.

It is found in the cytoplasm. The enzyme catalyses ITP + H2O = IMP + diphosphate + H(+). It catalyses the reaction dITP + H2O = dIMP + diphosphate + H(+). The catalysed reaction is XTP + H2O = XMP + diphosphate + H(+). Pyrophosphatase that hydrolyzes non-canonical purine nucleotides such as inosine triphosphate (ITP), deoxyinosine triphosphate (dITP) or xanthosine 5'-triphosphate (XTP) to their respective monophosphate derivatives. The enzyme does not distinguish between the deoxy- and ribose forms. Probably excludes non-canonical purines from RNA and DNA precursor pools, thus preventing their incorporation into RNA and DNA and avoiding chromosomal lesions. This Aedes aegypti (Yellowfever mosquito) protein is Inosine triphosphate pyrophosphatase.